The primary structure comprises 570 residues: Proline--tRNA ligase (570 aa).

A disordered region spans residues 238 to 257; the sequence is ARPAPAEHAEPRPLEKVETP.

The protein belongs to the class-II aminoacyl-tRNA synthetase family. ProS type 1 subfamily. Homodimer.

The protein localises to the cytoplasm. The enzyme catalyses tRNA(Pro) + L-proline + ATP = L-prolyl-tRNA(Pro) + AMP + diphosphate. In terms of biological role, catalyzes the attachment of proline to tRNA(Pro) in a two-step reaction: proline is first activated by ATP to form Pro-AMP and then transferred to the acceptor end of tRNA(Pro). As ProRS can inadvertently accommodate and process non-cognate amino acids such as alanine and cysteine, to avoid such errors it has two additional distinct editing activities against alanine. One activity is designated as 'pretransfer' editing and involves the tRNA(Pro)-independent hydrolysis of activated Ala-AMP. The other activity is designated 'posttransfer' editing and involves deacylation of mischarged Ala-tRNA(Pro). The misacylated Cys-tRNA(Pro) is not edited by ProRS. The sequence is that of Proline--tRNA ligase from Geobacter sulfurreducens (strain ATCC 51573 / DSM 12127 / PCA).